We begin with the raw amino-acid sequence, 229 residues long: Pdp3-interacting factor 1 (229 aa).

D12 functions as the Nucleophile in the catalytic mechanism. Mg(2+) contacts are provided by D12, D14, and D176. The active-site Proton donor is D14.

Belongs to the HAD-like hydrolase superfamily. Component of the mst2 complex composed of at least eaf6, mst2, nto1, pdp3, ptf1, ptf2 and tfg3. The cofactor is Mg(2+).

The protein resides in the cytoplasm. It is found in the nucleus. It catalyses the reaction D-ribitol 5-phosphate + H2O = ribitol + phosphate. It carries out the reaction D-sorbitol 6-phosphate + H2O = D-sorbitol + phosphate. The enzyme catalyses sn-glycerol 1-phosphate + H2O = glycerol + phosphate. The catalysed reaction is D-erythrose 4-phosphate + H2O = D-erythrose + phosphate. Functionally, component of the mst2 complex which is a highly specific H3 lysine 14 (H3K14) acetyltransferase that functions together with gcn5 to regulate global levels of H3K14 acetylation (H3K14ac), critical for DNA damage checkpoint activation. In terms of biological role, may also function as a sugar alcohol (polyol) phosphatase that prevents accumulation of toxic levels of polyol phosphates, which can impair glycolysis by inhibiting glucose-6-phosphate isomerase. The chain is Pdp3-interacting factor 1 from Schizosaccharomyces pombe (strain 972 / ATCC 24843) (Fission yeast).